The chain runs to 306 residues: Curved DNA-binding protein (306 aa).

A J domain is found at 5–69 (DYYAIMGVKP…QRRAEYDQMW (65 aa)).

The protein resides in the cytoplasm. It localises to the nucleoid. Its function is as follows. DNA-binding protein that preferentially recognizes a curved DNA sequence. It is probably a functional analog of DnaJ; displays overlapping activities with DnaJ, but functions under different conditions, probably acting as a molecular chaperone in an adaptive response to environmental stresses other than heat shock. Lacks autonomous chaperone activity; binds native substrates and targets them for recognition by DnaK. Its activity is inhibited by the binding of CbpM. This chain is Curved DNA-binding protein, found in Escherichia coli (strain K12 / MC4100 / BW2952).